A 182-amino-acid chain; its full sequence is Acireductone dioxygenase (182 aa).

Fe(2+)-binding residues include H100, H102, E106, and H145. Residues H100, H102, E106, and H145 each contribute to the Ni(2+) site.

This sequence belongs to the acireductone dioxygenase (ARD) family. As to quaternary structure, monomer. Fe(2+) serves as cofactor. Requires Ni(2+) as cofactor.

The catalysed reaction is 1,2-dihydroxy-5-(methylsulfanyl)pent-1-en-3-one + O2 = 3-(methylsulfanyl)propanoate + CO + formate + 2 H(+). The enzyme catalyses 1,2-dihydroxy-5-(methylsulfanyl)pent-1-en-3-one + O2 = 4-methylsulfanyl-2-oxobutanoate + formate + 2 H(+). It participates in amino-acid biosynthesis; L-methionine biosynthesis via salvage pathway; L-methionine from S-methyl-5-thio-alpha-D-ribose 1-phosphate: step 5/6. Functionally, catalyzes 2 different reactions between oxygen and the acireductone 1,2-dihydroxy-3-keto-5-methylthiopentene (DHK-MTPene) depending upon the metal bound in the active site. Fe-containing acireductone dioxygenase (Fe-ARD) produces formate and 2-keto-4-methylthiobutyrate (KMTB), the alpha-ketoacid precursor of methionine in the methionine recycle pathway. Ni-containing acireductone dioxygenase (Ni-ARD) produces methylthiopropionate, carbon monoxide and formate, and does not lie on the methionine recycle pathway. This is Acireductone dioxygenase from Nostoc sp. (strain PCC 7120 / SAG 25.82 / UTEX 2576).